A 1446-amino-acid chain; its full sequence is DNA-directed RNA polymerase subunit beta'' (1446 aa).

Residues Cys217, Cys285, Cys292, and Cys295 each contribute to the Zn(2+) site.

This sequence belongs to the RNA polymerase beta' chain family. RpoC2 subfamily. As to quaternary structure, in plastids the minimal PEP RNA polymerase catalytic core is composed of four subunits: alpha, beta, beta', and beta''. When a (nuclear-encoded) sigma factor is associated with the core the holoenzyme is formed, which can initiate transcription. The cofactor is Zn(2+).

It localises to the plastid. Its subcellular location is the chloroplast. It carries out the reaction RNA(n) + a ribonucleoside 5'-triphosphate = RNA(n+1) + diphosphate. DNA-dependent RNA polymerase catalyzes the transcription of DNA into RNA using the four ribonucleoside triphosphates as substrates. This is DNA-directed RNA polymerase subunit beta'' from Thalassiosira pseudonana (Marine diatom).